A 349-amino-acid chain; its full sequence is Putative transport protein jhp_0514 (349 aa).

8 consecutive transmembrane segments (helical) span residues 6-26 (FFWILFLIGFYWMLYLYQDFL), 27-47 (MDALIAGLLCVGLFQVKVFLN), 56-76 (SFLCVLVLASVVIVPLYFIVY), 143-163 (LKLVTDALFILGLLFFFFYYG), 195-215 (VLLTSLITVILEGVAFGTMII), 224-244 (LGILYGLASLVPAVGGALIWI), 258-278 (EAIFIVLYSILLIGVLIDSVI), and 300-320 (ILIFFSMIAGISQFGFWGIIV).

The protein belongs to the autoinducer-2 exporter (AI-2E) (TC 2.A.86) family.

It localises to the cell membrane. This Helicobacter pylori (strain J99 / ATCC 700824) (Campylobacter pylori J99) protein is Putative transport protein jhp_0514.